Reading from the N-terminus, the 341-residue chain is MRVLGLETSCDETGVALYDSERGLLADALFSQIDLHRVYGGVVPELASRDHVKRMLPLIRQVLDESGCTPADIDAIAYTAGPGLVGALLVGASCAQAMAFAWGVPAVGVHHMEGHLLAPMLEEQPPRFPFVALLVSGGHTQLVRVDGIGRYQLLGESVDDAAGEAFDKTAKLIGLGYPGGPEIARLAELGTPGRFVFPRPMTDRPGLDFSFSGLKTFTLNTWQRCVEAGDDSEQTRCDIALAFQTAVVETLLIKCRRALKQTGLKNLVIAGGVSANQALRSGLEKMLGEMKGQVFYARPRFCTDNGAMIAYAGCQRLLAGQHDGPAISVQPRWPMESLPAV.

Residues H111 and H115 each contribute to the Fe cation site. Substrate-binding positions include 134 to 138, D167, G180, and N276; that span reads LVSGG. D304 is a binding site for Fe cation.

Belongs to the KAE1 / TsaD family. Requires Fe(2+) as cofactor.

It localises to the cytoplasm. The enzyme catalyses L-threonylcarbamoyladenylate + adenosine(37) in tRNA = N(6)-L-threonylcarbamoyladenosine(37) in tRNA + AMP + H(+). Functionally, required for the formation of a threonylcarbamoyl group on adenosine at position 37 (t(6)A37) in tRNAs that read codons beginning with adenine. Is involved in the transfer of the threonylcarbamoyl moiety of threonylcarbamoyl-AMP (TC-AMP) to the N6 group of A37, together with TsaE and TsaB. TsaD likely plays a direct catalytic role in this reaction. This chain is tRNA N6-adenosine threonylcarbamoyltransferase, found in Pseudomonas aeruginosa (strain LESB58).